The primary structure comprises 235 residues: Eukaryotic translation initiation factor 4E-1 (235 aa).

Positions 1–52 (MVVEDSMKATSAEDLSNSIANQNPRGRGGDEDEELEEGEIVGDDDLDSSNLS) are disordered. Over residues 13–24 (EDLSNSIANQNP) the composition is skewed to polar residues. The span at 30-47 (DEDEELEEGEIVGDDDLD) shows a compositional bias: acidic residues. 2 EIF4G-binding regions span residues 60 to 63 (HPLE) and 70 to 106 (FDNP…NNIH). MRNA is bound by residues 78-83 (KQATWG), lysine 110, and 128-129 (WE). A disulfide bridge links cysteine 133 with cysteine 171. Positions 154-163 (YTLLAMIGEQ) are EIF4G-binding. MRNA-binding positions include 178-183 (RSGQDK) and 223-227 (KKFDR).

This sequence belongs to the eukaryotic initiation factor 4E family. EIF4F is a multi-subunit complex, the composition of which varies with external and internal environmental conditions. It is composed of at least EIF4A, EIF4E and EIF4G. EIF4E is also known to interact with other partners. Interacts directly with eIF4G. In higher plants two isoforms of EIF4F have been identified, named isoform EIF4F and isoform EIF(iso)4F. Isoform EIF4F has subunits p220 and p26, whereas isoform EIF(iso)4F has subunits p82 and p28. In terms of assembly, (Microbial infection) Interacts with potyvirus viral genome-linked protein (VPg); this interaction is possible in susceptible hosts but impaired in resistant plants. Post-translationally, according to the redox status, the Cys-133-Cys-171 disulfide bridge may have a role in regulating protein function by affecting its ability to bind capped mRNA.

It is found in the nucleus. The protein resides in the cytoplasm. Its function is as follows. Component of the protein complex eIF4F, which is involved in the recognition of the mRNA cap, ATP-dependent unwinding of 5'-terminal secondary structure and recruitment of mRNA to the ribosome. Recognizes and binds the 7-methylguanosine-containing mRNA cap during an early step in the initiation of protein synthesis and facilitates ribosome binding by inducing the unwinding of the mRNAs secondary structures. Key component of recessive resistance to potyviruses and Tombusviridae genus Carmovirus such as melon necrotic spot virus (MNSV). In terms of biological role, (Microbial infection) Susceptibility host factor required for viral infection by recruiting viral RNAs, including uncapped and non-polyadenylated RNA, to the host ribosomal complex via an interaction with viral genome-linked protein (VPg). The sequence is that of Eukaryotic translation initiation factor 4E-1 from Cucumis melo (Muskmelon).